Reading from the N-terminus, the 202-residue chain is Recoverin (202 aa).

Gly2 carries N-myristoyl glycine lipidation. EF-hand domains lie at 24-59 (TEEE…FFPE), 61-96 (DPKA…TSAG), 97-132 (KTNQ…IFKM), and 147-182 (TPEK…NKEI). Position 39 is a cysteine sulfenic acid (-SOH) (Cys39). Asp74, Asn76, Asp78, Thr80, Glu85, Asp110, Asp112, Asn114, Thr116, and Glu121 together coordinate Ca(2+). The interval 189-192 (EPQK) is interaction with GRK1. A modulates EF-hand 3 domain calcium binding affinity region spans residues 191–202 (QKVKEKLKEKKL).

It belongs to the recoverin family. As to quaternary structure, homodimer; disulfide-linked. Homodimerization is caused by prolonged intense illumination. May form a complex composed of RHO, GRK1 and RCVRN in a Ca(2+)-dependent manner; RCVRN prevents the interaction between GRK1 and RHO. Interacts (via C-terminus) with GRK1 (via N-terminus); the interaction is Ca(2+)-dependent. In terms of processing, the N-terminal glycine is linked to one of four different types of acyl groups. The most abundant is myristoleate (14:1), but 14:0, 14:2, and 12:0 acyl residues are also present. The Ca(2+) induced exposure of the myristoyl group, known as the calcium-myristoyl switch, promotes RCVRN binding to the photoreceptor cell membranes only when intracellular Ca(2+) concentration is high. Oxidation on Cys-39 occurs in response to prolonged intense illumination and results in the formation of disulfide homodimers, and to a lesser extent disulfide-linked heterodimers. Expressed in the retina (at protein level). Expressed in the pineal gland (at protein level).

It localises to the photoreceptor inner segment. Its subcellular location is the cell projection. The protein localises to the cilium. The protein resides in the photoreceptor outer segment. It is found in the photoreceptor outer segment membrane. It localises to the perikaryon. Functionally, acts as a calcium sensor and regulates phototransduction of cone and rod photoreceptor cells. Modulates light sensitivity of cone photoreceptor in dark and dim conditions. In response to high Ca(2+) levels induced by low light levels, prolongs RHO/rhodopsin activation in rod photoreceptor cells by binding to and inhibiting GRK1-mediated phosphorylation of RHO/rhodopsin. Plays a role in scotopic vision/enhances vision in dim light by enhancing signal transfer between rod photoreceptors and rod bipolar cells. Improves rod photoreceptor sensitivity in dim light and mediates response of rod photoreceptors to facilitate detection of change and motion in bright light. The chain is Recoverin (RCVRN) from Bos taurus (Bovine).